Here is a 653-residue protein sequence, read N- to C-terminus: Acetyl-coenzyme A synthetase (653 aa).

Residues arginine 195–lysine 198 and threonine 314 contribute to the CoA site. ATP contacts are provided by residues glycine 390–proline 392, aspartate 414–threonine 419, aspartate 505, and arginine 520. Serine 528 contributes to the CoA binding site. Arginine 531 is a binding site for ATP. Residues valine 542 and valine 547 each coordinate Mg(2+). Lysine 617 is subject to N6-acetyllysine.

The protein belongs to the ATP-dependent AMP-binding enzyme family. The cofactor is Mg(2+). Acetylated. Deacetylation by the SIR2-homolog deacetylase activates the enzyme.

It catalyses the reaction acetate + ATP + CoA = acetyl-CoA + AMP + diphosphate. In terms of biological role, catalyzes the conversion of acetate into acetyl-CoA (AcCoA), an essential intermediate at the junction of anabolic and catabolic pathways. AcsA undergoes a two-step reaction. In the first half reaction, AcsA combines acetate with ATP to form acetyl-adenylate (AcAMP) intermediate. In the second half reaction, it can then transfer the acetyl group from AcAMP to the sulfhydryl group of CoA, forming the product AcCoA. This chain is Acetyl-coenzyme A synthetase, found in Pasteurella multocida (strain Pm70).